Consider the following 202-residue polypeptide: Guanylate kinase (202 aa).

The region spanning 18-200 is the Guanylate kinase-like domain; the sequence is LKPVVVFGPS…AYKQLEAICL (183 aa). Residue 25 to 32 coordinates ATP; it reads GPSGVGKS.

It belongs to the guanylate kinase family.

It catalyses the reaction GMP + ATP = GDP + ADP. Functionally, essential for recycling GMP and indirectly, cGMP. The chain is Guanylate kinase from Schizosaccharomyces pombe (strain 972 / ATCC 24843) (Fission yeast).